The chain runs to 393 residues: 8-amino-7-oxononanoate synthase (393 aa).

A substrate-binding site is contributed by R18. Residue 105–106 (GY) participates in pyridoxal 5'-phosphate binding. H130 serves as a coordination point for substrate. Residues S178, H206, and T234 each contribute to the pyridoxal 5'-phosphate site. K237 carries the N6-(pyridoxal phosphate)lysine modification. A substrate-binding site is contributed by T353.

Belongs to the class-II pyridoxal-phosphate-dependent aminotransferase family. BioF subfamily. In terms of assembly, homodimer. Requires pyridoxal 5'-phosphate as cofactor.

The catalysed reaction is 6-carboxyhexanoyl-[ACP] + L-alanine + H(+) = (8S)-8-amino-7-oxononanoate + holo-[ACP] + CO2. It participates in cofactor biosynthesis; biotin biosynthesis. Catalyzes the decarboxylative condensation of pimeloyl-[acyl-carrier protein] and L-alanine to produce 8-amino-7-oxononanoate (AON), [acyl-carrier protein], and carbon dioxide. The protein is 8-amino-7-oxononanoate synthase of Geotalea daltonii (strain DSM 22248 / JCM 15807 / FRC-32) (Geobacter daltonii).